The primary structure comprises 503 residues: uncharacterized protein (503 aa).

A helical transmembrane segment spans residues 26–46; it reads ILFLLLGLIILVNISINVATA. 4 disordered regions span residues 155 to 176, 311 to 381, 436 to 456, and 472 to 503; these read RPLS…MSQM, YDAR…ESHE, QISD…NPGG, and VQEN…GKLN. Composition is skewed to basic and acidic residues over residues 311–322 and 334–346; these read YDARDQWRRGTE and NPRE…DHNS. Polar residues predominate over residues 348–367; that stretch reads AHRQNFSSHTHSQPNHSPPQ. Positions 493-503 are enriched in basic residues; it reads SLHRSRTGKLN.

The protein localises to the membrane. This is an uncharacterized protein from Mus musculus (Mouse).